Consider the following 265-residue polypeptide: MPRLCSSRSGALLLALLLQASMEVRGWCLESSQCQDLTTESNLLACIRACKPDLSAETPVFPGNGDEQPLTENPRKYVMGHFRWDRFGRRNGSSSSGVGGAAQKREEEVAVGEGPGPRGDDAETGPREDKRSYSMEHFRWGKPVGKKRRPVKVYPNGAEDESAQAFPLEFKRELTGERLEQARGPEAQAESAAARAELEYGLVAEAEAEAAEKKDSGPYKMEHFRWGSPPKDKRYGGFMTSEKSQTPLVTLFKNAIIKNAHKKGQ.

The first 26 residues, 1-26 (MPRLCSSRSGALLLALLLQASMEVRG), serve as a signal peptide directing secretion. Cystine bridges form between C28-C50 and C34-C46. T71 carries O-linked (GalNAc...) threonine glycosylation. F87 carries the post-translational modification Phenylalanine amide. Residues 89–138 (RRNGSSSSGVGGAAQKREEEVAVGEGPGPRGDDAETGPREDKRSYSMEHF) form a disordered region. N-linked (GlcNAc...) asparagine glycosylation occurs at N91. A propeptide spanning residues 106–129 (EEEVAVGEGPGPRGDDAETGPRED) is cleaved from the precursor. Basic and acidic residues predominate over residues 118–138 (RGDDAETGPREDKRSYSMEHF). The residue at position 132 (S132) is an N-acetylserine; in Corticotropin. V144 carries the valine amide modification. The residue at position 162 (S162) is a Phosphoserine. E173 carries the pyrrolidone carboxylic acid (Glu); partial modification. Position 200 is a sulfotyrosine (Y200). Residues 209-240 (EAAEKKDSGPYKMEHFRWGSPPKDKRYGGFMT) form a disordered region. Over residues 210–235 (AAEKKDSGPYKMEHFRWGSPPKDKRY) the composition is skewed to basic and acidic residues.

The protein belongs to the POMC family. Post-translationally, specific enzymatic cleavages at paired basic residues yield the different active peptides. In terms of tissue distribution, ACTH and MSH are produced by the pituitary gland.

The protein localises to the secreted. Stimulates the adrenal glands to release cortisol. Its function is as follows. Anorexigenic peptide. Increases the pigmentation of skin by increasing melanin production in melanocytes. In terms of biological role, endogenous orexigenic opiate. Functionally, endogenous opiate. This is Pro-opiomelanocortin (POMC) from Bos taurus (Bovine).